The following is an 82-amino-acid chain: Small ribosomal subunit protein bS18 (82 aa).

Belongs to the bacterial ribosomal protein bS18 family. In terms of assembly, part of the 30S ribosomal subunit. Forms a tight heterodimer with protein bS6.

Functionally, binds as a heterodimer with protein bS6 to the central domain of the 16S rRNA, where it helps stabilize the platform of the 30S subunit. This chain is Small ribosomal subunit protein bS18, found in Bartonella bacilliformis (strain ATCC 35685 / KC583 / Herrer 020/F12,63).